Here is a 295-residue protein sequence, read N- to C-terminus: Pyridoxal 5'-phosphate synthase subunit PdxS (295 aa).

D25 contributes to the D-ribose 5-phosphate binding site. K82 (schiff-base intermediate with D-ribose 5-phosphate) is an active-site residue. Position 154 (G154) interacts with D-ribose 5-phosphate. Residue R166 participates in D-glyceraldehyde 3-phosphate binding. D-ribose 5-phosphate is bound by residues G215 and 236–237 (GS).

Belongs to the PdxS/SNZ family. As to quaternary structure, in the presence of PdxT, forms a dodecamer of heterodimers.

The catalysed reaction is aldehydo-D-ribose 5-phosphate + D-glyceraldehyde 3-phosphate + L-glutamine = pyridoxal 5'-phosphate + L-glutamate + phosphate + 3 H2O + H(+). It functions in the pathway cofactor biosynthesis; pyridoxal 5'-phosphate biosynthesis. Catalyzes the formation of pyridoxal 5'-phosphate from ribose 5-phosphate (RBP), glyceraldehyde 3-phosphate (G3P) and ammonia. The ammonia is provided by the PdxT subunit. Can also use ribulose 5-phosphate and dihydroxyacetone phosphate as substrates, resulting from enzyme-catalyzed isomerization of RBP and G3P, respectively. The polypeptide is Pyridoxal 5'-phosphate synthase subunit PdxS (Bacillus mycoides (strain KBAB4) (Bacillus weihenstephanensis)).